A 1007-amino-acid polypeptide reads, in one-letter code: Serine/threonine-protein kinase PRP4 homolog (1007 aa).

Residues 1 to 10 (MAAAETQSLR) are compositionally biased toward polar residues. A disordered region spans residues 1–99 (MAAAETQSLR…EGMSPAKRTK (99 aa)). Position 2 is an N-acetylalanine (A2). Phosphoserine is present on residues S8, S20, S23, and S32. 2 stretches are compositionally biased toward basic residues: residues 39-59 (KHSR…KHKH) and 67-81 (KKHK…HKRK). The span at 82-91 (EIIDASDKEG) shows a compositional bias: basic and acidic residues. Phosphoserine is present on residues S87 and S93. At K99 the chain carries N6-acetyllysine; alternate. Residue K99 forms a Glycyl lysine isopeptide (Lys-Gly) (interchain with G-Cter in SUMO2); alternate linkage. Residue K111 forms a Glycyl lysine isopeptide (Lys-Gly) (interchain with G-Cter in SUMO2) linkage. Residue K117 forms a Glycyl lysine isopeptide (Lys-Gly) (interchain with G-Cter in SUMO2); alternate linkage. A Glycyl lysine isopeptide (Lys-Gly) (interchain with G-Cter in SUMO1); alternate cross-link involves residue K117. S131 is subject to Phosphoserine. A Phosphotyrosine modification is found at Y140. Disordered stretches follow at residues 140 to 533 (YESG…EEED) and 559 to 583 (SNMS…SPDD). Residues S142, S144, and S166 each carry the phosphoserine modification. Over residues 157–168 (GNRSSTRSSSTK) the composition is skewed to low complexity. Glycyl lysine isopeptide (Lys-Gly) (interchain with G-Cter in SUMO2) cross-links involve residues K170 and K177. Basic residues-rich tracts occupy residues 179 to 202 (TTKK…KKSK) and 214 to 230 (RSKS…SKRS). Phosphoserine is present on residues S239, S241, S257, S277, S283, S292, and S294. The span at 247-270 (RSQEKIGKARSPTDDKVKIEDKSK) shows a compositional bias: basic and acidic residues. Over residues 302–315 (SKDRRSRSKERKSK) the composition is skewed to basic residues. Residues 316-325 (RSETDKEKKP) show a composition bias toward basic and acidic residues. 5 positions are modified to phosphoserine: S328, S354, S356, S366, and S368. The segment covering 342 to 367 (PSRRPGRSPKRRSLSPKPRDKSRRSR) has biased composition (basic residues). T385 is modified (phosphothreonine). S387 carries the post-translational modification Phosphoserine. 2 stretches are compositionally biased toward basic and acidic residues: residues 395-408 (RSLE…ERRR) and 415-429 (RPRD…RSKD). A phosphoserine mark is found at S427, S431, and S437. A compositionally biased stretch (basic residues) spans 438 to 497 (PTRRRSRSPIRRRSRSPLRRSRSPRRRSRSPRRRDRGRRSRSRLRRRSRSRGGRRRRSRS). Phosphoserine occurs at positions 518, 519, 520, 565, 569, 578, and 580. Over residues 518–533 (SSSDDNLEDFDVEEED) the composition is skewed to acidic residues. Residues 562-581 (SVPSEPSSPQSSTRTRSPSP) show a composition bias toward low complexity. Glycyl lysine isopeptide (Lys-Gly) (interchain with G-Cter in SUMO2) cross-links involve residues K593 and K659. The 320-residue stretch at 687–1006 (YNVYGYTGQG…ALQHAFIQEK (320 aa)) folds into the Protein kinase domain. ATP contacts are provided by residues 693–701 (TGQGVFSNV) and K717. K717 carries the post-translational modification N6-acetyllysine. D815 acts as the Proton acceptor in catalysis. Position 849 is a phosphotyrosine (Y849). Residue S852 is modified to Phosphoserine.

This sequence belongs to the protein kinase superfamily. CMGC Ser/Thr protein kinase family. In terms of assembly, interacts with CLK1 C-terminus. Associates with the U5 snRNP and NCOR1 deacetylase complexes. Identified in the spliceosome C complex. Post-translationally, phosphorylated by CLK1. Autophosphorylated; phosphorylation inhibits interaction with its targets, such as PRPF6 or SMARCA4. As to expression, ubiquitous.

It is found in the nucleus. It localises to the chromosome. The protein resides in the centromere. The protein localises to the kinetochore. The enzyme catalyses L-seryl-[protein] + ATP = O-phospho-L-seryl-[protein] + ADP + H(+). The catalysed reaction is L-threonyl-[protein] + ATP = O-phospho-L-threonyl-[protein] + ADP + H(+). In terms of biological role, serine/threonine kinase involved in spliceosomal assembly as well as mitosis and signaling regulation. Connects chromatin mediated regulation of transcription and pre-mRNA splicing. During spliceosomal assembly, interacts with and phosphorylates PRPF6 and PRPF31, components of the U4/U6-U5 tri-small nuclear ribonucleoprotein (snRNP), to facilitate the formation of the spliceosome B complex. Plays a role in regulating transcription and the spindle assembly checkpoint (SAC). Associates with U5 snRNP and NCOR1 deacetylase complexes which may allow a coordination of pre-mRNA splicing with chromatin remodeling events involved in transcriptional regulation. Associates and probably phosphorylates SMARCA4 and NCOR1. Phosphorylates SRSF1. Associates with kinetochores during mitosis and is necessary for recruitment and maintenance of the checkpoint proteins such as MAD1L1 and MAD12L1 at the kinetochores. Phosphorylates and regulates the activity of the transcription factors such as ELK1 and KLF13. Phosphorylates nuclear YAP1 and WWTR1/TAZ which induces nuclear exclusion and regulates Hippo signaling pathway, involved in tissue growth control. This chain is Serine/threonine-protein kinase PRP4 homolog, found in Homo sapiens (Human).